The chain runs to 743 residues: 1,4-alpha-glucan branching enzyme GlgB (743 aa).

The active-site Nucleophile is the Asp-416. Residue Glu-469 is the Proton donor of the active site.

This sequence belongs to the glycosyl hydrolase 13 family. GlgB subfamily. In terms of assembly, monomer.

The catalysed reaction is Transfers a segment of a (1-&gt;4)-alpha-D-glucan chain to a primary hydroxy group in a similar glucan chain.. The protein operates within glycan biosynthesis; glycogen biosynthesis. Catalyzes the formation of the alpha-1,6-glucosidic linkages in glycogen by scission of a 1,4-alpha-linked oligosaccharide from growing alpha-1,4-glucan chains and the subsequent attachment of the oligosaccharide to the alpha-1,6 position. In Shewanella baltica (strain OS223), this protein is 1,4-alpha-glucan branching enzyme GlgB.